Reading from the N-terminus, the 149-residue chain is MELILLQKVANLGALGDKVTVKPGYGRNFLLPNGVAVPATEANLAAFQAKRAEYEAKAKSELDQAQARAAKFEGASVTVSAHASTEGKLYGSVGARDIAEAFTAVGLPLEKKEVILGEGAFRLIGEYDVLLHLHADVESTVKVIVQGVP.

It belongs to the bacterial ribosomal protein bL9 family.

Binds to the 23S rRNA. The sequence is that of Large ribosomal subunit protein bL9 from Xylella fastidiosa (strain M23).